The primary structure comprises 277 residues: MEMO1 family protein TRQ2_0860 (277 aa).

Belongs to the MEMO1 family.

This Thermotoga sp. (strain RQ2) protein is MEMO1 family protein TRQ2_0860.